Here is a 207-residue protein sequence, read N- to C-terminus: Urease accessory protein UreG (207 aa).

13-20 (GPVGSGKT) provides a ligand contact to GTP.

The protein belongs to the SIMIBI class G3E GTPase family. UreG subfamily. Homodimer. UreD, UreF and UreG form a complex that acts as a GTP-hydrolysis-dependent molecular chaperone, activating the urease apoprotein by helping to assemble the nickel containing metallocenter of UreC. The UreE protein probably delivers the nickel.

The protein resides in the cytoplasm. Functionally, facilitates the functional incorporation of the urease nickel metallocenter. This process requires GTP hydrolysis, probably effectuated by UreG. The protein is Urease accessory protein UreG of Azoarcus sp. (strain BH72).